Consider the following 233-residue polypeptide: tRNA (guanine-N(7)-)-methyltransferase (233 aa).

The tract at residues methionine 1 to proline 22 is disordered. The S-adenosyl-L-methionine site is built by glutamate 64, glutamate 89, aspartate 116, and aspartate 138. Aspartate 138 is an active-site residue. Substrate is bound by residues lysine 142, aspartate 174, and threonine 212 to glutamate 215.

The protein belongs to the class I-like SAM-binding methyltransferase superfamily. TrmB family.

It carries out the reaction guanosine(46) in tRNA + S-adenosyl-L-methionine = N(7)-methylguanosine(46) in tRNA + S-adenosyl-L-homocysteine. It participates in tRNA modification; N(7)-methylguanine-tRNA biosynthesis. Functionally, catalyzes the formation of N(7)-methylguanine at position 46 (m7G46) in tRNA. This chain is tRNA (guanine-N(7)-)-methyltransferase, found in Brucella abortus (strain 2308).